The primary structure comprises 176 residues: Crossover junction endodeoxyribonuclease RuvC (176 aa).

Catalysis depends on residues aspartate 7, glutamate 68, and aspartate 141. 3 residues coordinate Mg(2+): aspartate 7, glutamate 68, and aspartate 141.

The protein belongs to the RuvC family. In terms of assembly, homodimer which binds Holliday junction (HJ) DNA. The HJ becomes 2-fold symmetrical on binding to RuvC with unstacked arms; it has a different conformation from HJ DNA in complex with RuvA. In the full resolvosome a probable DNA-RuvA(4)-RuvB(12)-RuvC(2) complex forms which resolves the HJ. It depends on Mg(2+) as a cofactor.

The protein localises to the cytoplasm. The catalysed reaction is Endonucleolytic cleavage at a junction such as a reciprocal single-stranded crossover between two homologous DNA duplexes (Holliday junction).. Functionally, the RuvA-RuvB-RuvC complex processes Holliday junction (HJ) DNA during genetic recombination and DNA repair. Endonuclease that resolves HJ intermediates. Cleaves cruciform DNA by making single-stranded nicks across the HJ at symmetrical positions within the homologous arms, yielding a 5'-phosphate and a 3'-hydroxyl group; requires a central core of homology in the junction. The consensus cleavage sequence is 5'-(A/T)TT(C/G)-3'. Cleavage occurs on the 3'-side of the TT dinucleotide at the point of strand exchange. HJ branch migration catalyzed by RuvA-RuvB allows RuvC to scan DNA until it finds its consensus sequence, where it cleaves and resolves the cruciform DNA. This chain is Crossover junction endodeoxyribonuclease RuvC, found in Streptomyces avermitilis (strain ATCC 31267 / DSM 46492 / JCM 5070 / NBRC 14893 / NCIMB 12804 / NRRL 8165 / MA-4680).